We begin with the raw amino-acid sequence, 199 residues long: ATP-dependent Clp protease proteolytic subunit (199 aa).

S98 (nucleophile) is an active-site residue. H123 is an active-site residue.

Belongs to the peptidase S14 family. As to quaternary structure, fourteen ClpP subunits assemble into 2 heptameric rings which stack back to back to give a disk-like structure with a central cavity, resembling the structure of eukaryotic proteasomes.

It is found in the cytoplasm. It carries out the reaction Hydrolysis of proteins to small peptides in the presence of ATP and magnesium. alpha-casein is the usual test substrate. In the absence of ATP, only oligopeptides shorter than five residues are hydrolyzed (such as succinyl-Leu-Tyr-|-NHMec, and Leu-Tyr-Leu-|-Tyr-Trp, in which cleavage of the -Tyr-|-Leu- and -Tyr-|-Trp bonds also occurs).. Cleaves peptides in various proteins in a process that requires ATP hydrolysis. Has a chymotrypsin-like activity. Plays a major role in the degradation of misfolded proteins. This is ATP-dependent Clp protease proteolytic subunit from Clostridium botulinum (strain Eklund 17B / Type B).